The chain runs to 244 residues: Probable transcriptional regulatory protein BT0025 (244 aa).

This sequence belongs to the TACO1 family.

The protein resides in the cytoplasm. The sequence is that of Probable transcriptional regulatory protein BT0025 from Borrelia turicatae (strain 91E135).